Here is a 72-residue protein sequence, read N- to C-terminus: Large ribosomal subunit protein bL31 (72 aa).

Zn(2+) contacts are provided by Cys16, Cys18, Cys38, and Cys41.

This sequence belongs to the bacterial ribosomal protein bL31 family. Type A subfamily. Part of the 50S ribosomal subunit. Zn(2+) serves as cofactor.

Its function is as follows. Binds the 23S rRNA. In Francisella tularensis subsp. holarctica (strain LVS), this protein is Large ribosomal subunit protein bL31.